Reading from the N-terminus, the 419-residue chain is Phospho-N-acetylmuramoyl-pentapeptide-transferase (419 aa).

The next 10 helical transmembrane spans lie at 22–42, 72–92, 99–119, 135–155, 208–228, 238–258, 278–298, 303–323, 328–348, and 396–416; these read YVSF…TVIG, TPTM…LLLA, ILLM…DDYI, IIGQ…NPAV, VLFG…FISN, GLAT…AYVS, LTIF…YNAY, FMGD…ALII, LLPI…IQVF, and KITV…IATL.

Belongs to the glycosyltransferase 4 family. MraY subfamily. Mg(2+) is required as a cofactor.

Its subcellular location is the cell inner membrane. It carries out the reaction UDP-N-acetyl-alpha-D-muramoyl-L-alanyl-gamma-D-glutamyl-meso-2,6-diaminopimeloyl-D-alanyl-D-alanine + di-trans,octa-cis-undecaprenyl phosphate = di-trans,octa-cis-undecaprenyl diphospho-N-acetyl-alpha-D-muramoyl-L-alanyl-D-glutamyl-meso-2,6-diaminopimeloyl-D-alanyl-D-alanine + UMP. Its pathway is cell wall biogenesis; peptidoglycan biosynthesis. In terms of biological role, catalyzes the initial step of the lipid cycle reactions in the biosynthesis of the cell wall peptidoglycan: transfers peptidoglycan precursor phospho-MurNAc-pentapeptide from UDP-MurNAc-pentapeptide onto the lipid carrier undecaprenyl phosphate, yielding undecaprenyl-pyrophosphoryl-MurNAc-pentapeptide, known as lipid I. The polypeptide is Phospho-N-acetylmuramoyl-pentapeptide-transferase (Porphyromonas gingivalis (strain ATCC BAA-308 / W83)).